The following is a 217-amino-acid chain: MHPSSRFHSNKKTFVRINNAIRAKEVLVIDSTGKSLGVLPIQEAQQRAQQQGLDLVEVSPHAHPPVCKILDYGKFKYSLSKKEKDSKKGATKLKEIQLHVNINEHDFLIKLKQAEAFMAKGMKVKFNLFLRGREITHQDLALNLMNRLIKELAHVGQTDQEPKLAGRNISLTFTPLPANKRLLKYNLPETETTRIREENREKQKEKENTSKEGNKDA.

The segment at 185–217 is disordered; that stretch reads YNLPETETTRIREENREKQKEKENTSKEGNKDA. The segment covering 191–217 has biased composition (basic and acidic residues); that stretch reads ETTRIREENREKQKEKENTSKEGNKDA.

The protein belongs to the IF-3 family. Monomer.

Its subcellular location is the cytoplasm. Functionally, IF-3 binds to the 30S ribosomal subunit and shifts the equilibrium between 70S ribosomes and their 50S and 30S subunits in favor of the free subunits, thus enhancing the availability of 30S subunits on which protein synthesis initiation begins. The polypeptide is Translation initiation factor IF-3 (Methylacidiphilum infernorum (isolate V4) (Methylokorus infernorum (strain V4))).